We begin with the raw amino-acid sequence, 585 residues long: 4-hydroxy-3-methylbut-2-en-1-yl diphosphate synthase (flavodoxin) (585 aa).

4 residues coordinate [4Fe-4S] cluster: Cys492, Cys495, Cys526, and Glu533.

It belongs to the IspG family. Requires [4Fe-4S] cluster as cofactor.

It carries out the reaction (2E)-4-hydroxy-3-methylbut-2-enyl diphosphate + oxidized [flavodoxin] + H2O + 2 H(+) = 2-C-methyl-D-erythritol 2,4-cyclic diphosphate + reduced [flavodoxin]. It participates in isoprenoid biosynthesis; isopentenyl diphosphate biosynthesis via DXP pathway; isopentenyl diphosphate from 1-deoxy-D-xylulose 5-phosphate: step 5/6. Its function is as follows. Converts 2C-methyl-D-erythritol 2,4-cyclodiphosphate (ME-2,4cPP) into 1-hydroxy-2-methyl-2-(E)-butenyl 4-diphosphate. The chain is 4-hydroxy-3-methylbut-2-en-1-yl diphosphate synthase (flavodoxin) from Akkermansia muciniphila (strain ATCC BAA-835 / DSM 22959 / JCM 33894 / BCRC 81048 / CCUG 64013 / CIP 107961 / Muc).